A 373-amino-acid polypeptide reads, in one-letter code: ATP phosphoribosyltransferase regulatory subunit (373 aa).

It belongs to the class-II aminoacyl-tRNA synthetase family. HisZ subfamily. In terms of assembly, heteromultimer composed of HisG and HisZ subunits.

The protein localises to the cytoplasm. It participates in amino-acid biosynthesis; L-histidine biosynthesis; L-histidine from 5-phospho-alpha-D-ribose 1-diphosphate: step 1/9. In terms of biological role, required for the first step of histidine biosynthesis. May allow the feedback regulation of ATP phosphoribosyltransferase activity by histidine. The sequence is that of ATP phosphoribosyltransferase regulatory subunit from Rhizobium etli (strain CIAT 652).